The chain runs to 702 residues: Elongation factor G (702 aa).

In terms of domain architecture, tr-type G spans Glu8–Val290. GTP contacts are provided by residues Ala17 to Thr24, Asp88 to His92, and Asn142 to Asp145.

Belongs to the TRAFAC class translation factor GTPase superfamily. Classic translation factor GTPase family. EF-G/EF-2 subfamily.

The protein localises to the cytoplasm. Catalyzes the GTP-dependent ribosomal translocation step during translation elongation. During this step, the ribosome changes from the pre-translocational (PRE) to the post-translocational (POST) state as the newly formed A-site-bound peptidyl-tRNA and P-site-bound deacylated tRNA move to the P and E sites, respectively. Catalyzes the coordinated movement of the two tRNA molecules, the mRNA and conformational changes in the ribosome. In Acidovorax ebreus (strain TPSY) (Diaphorobacter sp. (strain TPSY)), this protein is Elongation factor G.